Here is a 1163-residue protein sequence, read N- to C-terminus: Receptor-type guanylate cyclase gcy-21 (1163 aa).

The N-terminal stretch at methionine 1–asparagine 17 is a signal peptide. Over phenylalanine 18–threonine 490 the chain is Extracellular. Asparagine 102, asparagine 296, asparagine 322, asparagine 346, asparagine 466, and asparagine 488 each carry an N-linked (GlcNAc...) asparagine glycan. A helical membrane pass occupies residues phenylalanine 491–phenylalanine 511. At leucine 512–serine 1163 the chain is on the cytoplasmic side. In terms of domain architecture, Protein kinase spans phenylalanine 587–threonine 882. ATP contacts are provided by residues alanine 593–isoleucine 601 and lysine 635. Residues threonine 901–leucine 930 adopt a coiled-coil conformation. A Guanylate cyclase domain is found at threonine 953–glutamate 1083.

Belongs to the adenylyl cyclase class-4/guanylyl cyclase family. As to expression, expressed in ASG sensory neurons.

The protein localises to the cell membrane. The enzyme catalyses GTP = 3',5'-cyclic GMP + diphosphate. Guanylate cyclase involved in the production of the second messenger cGMP. Plays a role in dauer formation. The sequence is that of Receptor-type guanylate cyclase gcy-21 from Caenorhabditis elegans.